A 98-amino-acid polypeptide reads, in one-letter code: Large ribosomal subunit protein uL23 (98 aa).

It belongs to the universal ribosomal protein uL23 family. In terms of assembly, part of the 50S ribosomal subunit. Contacts protein L29, and trigger factor when it is bound to the ribosome.

Functionally, one of the early assembly proteins it binds 23S rRNA. One of the proteins that surrounds the polypeptide exit tunnel on the outside of the ribosome. Forms the main docking site for trigger factor binding to the ribosome. This is Large ribosomal subunit protein uL23 from Legionella pneumophila (strain Paris).